Reading from the N-terminus, the 87-residue chain is A-agglutinin-binding subunit (87 aa).

A signal peptide spans 1-18 (MQLLRCFSIFSVIASVLA). Thr-22 carries O-linked (Man...) threonine glycosylation. O-linked (Man...) serine glycosylation is present at Ser-30. O-linked (Man...) threonine glycosylation occurs at Thr-32. O-linked (Man...) serine glycosylation occurs at Ser-39. O-linked (Man...) threonine glycosylation is present at Thr-63. A glycan (O-linked (Man...) serine) is linked at Ser-66. Thr-75 carries O-linked (Man...) threonine glycosylation.

Heterodimer; disulfide-linked. Interacts with SAG1.

Its function is as follows. Receptor binding subunit of the a-agglutinin heterodimer. S.cerevisiae a and alpha cells express the complementary cell surface glycoproteins a-agglutinin and alpha-agglutinin, respectively, which interact with one another to promote cellular aggregation during mating. The sequence is that of A-agglutinin-binding subunit (AGA2) from Saccharomyces cerevisiae (strain ATCC 204508 / S288c) (Baker's yeast).